Consider the following 469-residue polypeptide: Bifunctional protein GlmU (469 aa).

The segment at 1–236 is pyrophosphorylase; it reads MLNIKLNIVI…ISEINGINDC (236 aa). UDP-N-acetyl-alpha-D-glucosamine-binding positions include 11–14, Lys-25, Gln-83, 88–89, 110–112, Gly-147, Glu-161, Asn-176, and Asn-234; these read LAAG, GT, and YGD. Asp-112 lines the Mg(2+) pocket. Asn-234 lines the Mg(2+) pocket. Positions 237-257 are linker; it reads AQLANLERLYQKEQAESLLRI. Residues 258–469 are N-acetyltransferase; that stretch reads GVIIADPNRF…KKKIRYNIIY (212 aa). Positions 340 and 358 each coordinate UDP-N-acetyl-alpha-D-glucosamine. The active-site Proton acceptor is His-370. 2 residues coordinate UDP-N-acetyl-alpha-D-glucosamine: Tyr-373 and Asn-384. Residues Ala-387, 393 to 394, Ser-412, Ala-430, and Arg-447 each bind acetyl-CoA; that span reads NY.

In the N-terminal section; belongs to the N-acetylglucosamine-1-phosphate uridyltransferase family. The protein in the C-terminal section; belongs to the transferase hexapeptide repeat family. In terms of assembly, homotrimer. Requires Mg(2+) as cofactor.

The protein resides in the cytoplasm. It carries out the reaction alpha-D-glucosamine 1-phosphate + acetyl-CoA = N-acetyl-alpha-D-glucosamine 1-phosphate + CoA + H(+). The enzyme catalyses N-acetyl-alpha-D-glucosamine 1-phosphate + UTP + H(+) = UDP-N-acetyl-alpha-D-glucosamine + diphosphate. It functions in the pathway nucleotide-sugar biosynthesis; UDP-N-acetyl-alpha-D-glucosamine biosynthesis; N-acetyl-alpha-D-glucosamine 1-phosphate from alpha-D-glucosamine 6-phosphate (route II): step 2/2. It participates in nucleotide-sugar biosynthesis; UDP-N-acetyl-alpha-D-glucosamine biosynthesis; UDP-N-acetyl-alpha-D-glucosamine from N-acetyl-alpha-D-glucosamine 1-phosphate: step 1/1. The protein operates within bacterial outer membrane biogenesis; LPS lipid A biosynthesis. Its function is as follows. Catalyzes the last two sequential reactions in the de novo biosynthetic pathway for UDP-N-acetylglucosamine (UDP-GlcNAc). The C-terminal domain catalyzes the transfer of acetyl group from acetyl coenzyme A to glucosamine-1-phosphate (GlcN-1-P) to produce N-acetylglucosamine-1-phosphate (GlcNAc-1-P), which is converted into UDP-GlcNAc by the transfer of uridine 5-monophosphate (from uridine 5-triphosphate), a reaction catalyzed by the N-terminal domain. The chain is Bifunctional protein GlmU from Baumannia cicadellinicola subsp. Homalodisca coagulata.